The primary structure comprises 184 residues: Photosynthetic apparatus regulatory protein RegA (184 aa).

The region spanning 14–128 (SLLLVDDDNA…DITNALLAKG (115 aa)) is the Response regulatory domain. The residue at position 63 (aspartate 63) is a 4-aspartylphosphate.

Post-translationally, phosphorylated by RegB.

Its function is as follows. Member of the two-component regulatory system RegB/RegA. Involved in transactivating anaerobic expression of the photosynthetic apparatus. It is a transcriptional regulator that is responsible for activating expression of the puf, puh, and puc operons in response to a decrease in oxygen tension. The sequence is that of Photosynthetic apparatus regulatory protein RegA (regA) from Rhodobacter capsulatus (Rhodopseudomonas capsulata).